Reading from the N-terminus, the 200-residue chain is Ras-related protein Rab-10 (200 aa).

GTP contacts are provided by Ser-18, Gly-19, Val-20, Gly-21, Lys-22, Thr-23, Cys-24, Asn-35, Thr-36, Ser-40, and Thr-41. Thr-23 serves as a coordination point for Mg(2+). 2 short sequence motifs (switch) span residues 32-46 and 64-81; these read DAFN…EIDF and DTAG…YYRG. Thr-41 and Asp-64 together coordinate Mg(2+). Gly-67 is a GTP binding site. Thr-73 is modified (phosphothreonine). Lys-102 carries the post-translational modification N6-acetyllysine. A Glycyl lysine isopeptide (Lys-Gly) (interchain with G-Cter in ubiquitin) cross-link involves residue Lys-102. GTP is bound by residues Asn-122, Lys-123, Asp-125, and Met-126. Lys-136 participates in a covalent cross-link: Glycyl lysine isopeptide (Lys-Gly) (interchain with G-Cter in ubiquitin). GTP is bound by residues Ser-152, Ala-153, and Lys-154. Lys-154 participates in a covalent cross-link: Glycyl lysine isopeptide (Lys-Gly) (interchain with G-Cter in ubiquitin). Residues Cys-199 and Cys-200 are each lipidated (S-geranylgeranyl cysteine).

Belongs to the small GTPase superfamily. Rab family. Interacts with MYO5A; mediates the transport to the plasma membrane of SLC2A4/GLUT4 storage vesicles. Interacts with GDI1 and with GDI2; negatively regulates RAB10 association with membranes and activation. Interacts (GDP-bound form) with LLGL1; the interaction is direct and promotes RAB10 association with membranes and activation through competition with the Rab inhibitor GDI1. Interacts with EXOC4; probably associates with the exocyst. Interacts (GTP-bound form) with MICALCL, MICAL1, MICAL3, EHBP1 and EHBP1L1; at least in case of MICAL1 two molecules of RAB10 can bind to one molecule of MICAL1. Interacts with TBC1D13. Interacts with SEC16A. Interacts with CHM. Interacts with LRRK2; interaction facilitates phosphorylation of Thr-73. Interacts with RILPL1 and RILPL2 when phosphorylated on Thr-73. Interacts with TBC1D21. Interacts with MARCKS. Mg(2+) is required as a cofactor. Post-translationally, phosphorylation of Thr-73 in the switch II region by LRRK2 prevents the association of RAB regulatory proteins, including CHM and RAB GDP dissociation inhibitors GDI1 and GDI2. Phosphorylation of Thr-73 by LRRK2 is stimulated by RAB29 and RAB32. Phosphorylation by LRRK2 is required for localization to stressed lysosomes. In terms of tissue distribution, highest levels in neural and muscle tissues.

Its subcellular location is the cytoplasmic vesicle membrane. It is found in the golgi apparatus. The protein localises to the trans-Golgi network membrane. The protein resides in the endosome membrane. It localises to the recycling endosome membrane. Its subcellular location is the cytoplasmic vesicle. It is found in the phagosome membrane. The protein localises to the cell projection. The protein resides in the cilium. It localises to the endoplasmic reticulum membrane. Its subcellular location is the cytoplasm. It is found in the perinuclear region. The protein localises to the lysosome. The enzyme catalyses GTP + H2O = GDP + phosphate + H(+). Regulated by guanine nucleotide exchange factors (GEFs) DENND4C and RABIF which promote the exchange of bound GDP for free GTP. Regulated by GTPase activating proteins (GAPs) including TBC1D21 which increase the GTP hydrolysis activity. Inhibited by GDP dissociation inhibitors GDI1 and GDI2 which prevent Rab-GDP dissociation. The small GTPases Rab are key regulators of intracellular membrane trafficking, from the formation of transport vesicles to their fusion with membranes. Rabs cycle between an inactive GDP-bound form and an active GTP-bound form that is able to recruit to membranes different set of downstream effectors directly responsible for vesicle formation, movement, tethering and fusion. That Rab is mainly involved in the biosynthetic transport of proteins from the Golgi to the plasma membrane. Regulates, for instance, SLC2A4/GLUT4 glucose transporter-enriched vesicles delivery to the plasma membrane. In parallel, it regulates the transport of TLR4, a toll-like receptor to the plasma membrane and therefore may be important for innate immune response. Also plays a specific role in asymmetric protein transport to the plasma membrane. In neurons, it is involved in axonogenesis through regulation of vesicular membrane trafficking toward the axonal plasma membrane. In epithelial cells, it regulates transport from the Golgi to the basolateral membrane. May play a role in the basolateral recycling pathway and in phagosome maturation. May play a role in endoplasmic reticulum dynamics and morphology controlling tubulation along microtubules and tubules fusion. Together with LRRK2, RAB8A, and RILPL1, it regulates ciliogenesis. When phosphorylated by LRRK2 on Thr-73, it binds RILPL1 and inhibits ciliogenesis. Participates in the export of a subset of neosynthesized proteins through a Rab8-Rab10-Rab11-dependent endososomal export route. Targeted to and stabilized on stressed lysosomes through LRRK2 phosphorylation where it promotes the extracellular release of lysosomal content through EHBP1 and EHNP1L1 effector proteins. This Rattus norvegicus (Rat) protein is Ras-related protein Rab-10.